Here is a 116-residue protein sequence, read N- to C-terminus: MANHRIDRVGMEIKREVNEILRLRVNDPRVQDVTITDVQMLGDLSMAKVFYTIHSTLASDNQKAQIGLEKATGTIKRELGKNLTMYKIPDLQFVKDESIEYGNKIDEMLRNLDKKD.

This sequence belongs to the RbfA family. In terms of assembly, monomer. Binds 30S ribosomal subunits, but not 50S ribosomal subunits or 70S ribosomes.

The protein resides in the cytoplasm. One of several proteins that assist in the late maturation steps of the functional core of the 30S ribosomal subunit. Associates with free 30S ribosomal subunits (but not with 30S subunits that are part of 70S ribosomes or polysomes). Required for efficient processing of 16S rRNA. May interact with the 5'-terminal helix region of 16S rRNA. This chain is Ribosome-binding factor A, found in Streptococcus agalactiae.